A 324-amino-acid polypeptide reads, in one-letter code: HPr kinase/phosphorylase (324 aa).

Active-site residues include H146 and K167. 161–168 (GDSGLGKS) lines the ATP pocket. S168 contributes to the Mg(2+) binding site. D185 functions as the Proton acceptor; for phosphorylation activity. Proton donor; for dephosphorylation activity in the catalytic mechanism. An important for the catalytic mechanism of both phosphorylation and dephosphorylation region spans residues 209–218 (LEVRGLGLLD). Mg(2+) is bound at residue E210. R250 is a catalytic residue. Residues 271 to 276 (QVAAGR) are important for the catalytic mechanism of dephosphorylation.

The protein belongs to the HPrK/P family. As to quaternary structure, homohexamer. The cofactor is Mg(2+).

The enzyme catalyses [HPr protein]-L-serine + ATP = [HPr protein]-O-phospho-L-serine + ADP + H(+). It catalyses the reaction [HPr protein]-O-phospho-L-serine + phosphate + H(+) = [HPr protein]-L-serine + diphosphate. Functionally, catalyzes the ATP- as well as the pyrophosphate-dependent phosphorylation of a specific serine residue in HPr, a phosphocarrier protein of the phosphoenolpyruvate-dependent sugar phosphotransferase system (PTS). HprK/P also catalyzes the pyrophosphate-producing, inorganic phosphate-dependent dephosphorylation (phosphorolysis) of seryl-phosphorylated HPr (P-Ser-HPr). The polypeptide is HPr kinase/phosphorylase (Ralstonia nicotianae (strain ATCC BAA-1114 / GMI1000) (Ralstonia solanacearum)).